We begin with the raw amino-acid sequence, 258 residues long: Small ribosomal subunit protein mS40 (258 aa).

The N-terminal 35 residues, 1-35 (MAASVLNVLLRRLPYFSPFRGAYGVQVPLQTLCTK), are a transit peptide targeting the mitochondrion. Residue serine 49 is modified to Phosphoserine. The disordered stretch occupies residues 221–258 (QGHLREESGPPPESMPKVPLTAPNEATSTEQAGPQSAL). Positions 244–258 (NEATSTEQAGPQSAL) are enriched in polar residues.

This sequence belongs to the bacterial ribosomal protein bS18 family. Mitochondrion-specific ribosomal protein mS40 subfamily. As to quaternary structure, component of the mitochondrial ribosome small subunit (28S) which comprises a 12S rRNA and about 30 distinct proteins.

Its subcellular location is the mitochondrion. In Bos taurus (Bovine), this protein is Small ribosomal subunit protein mS40.